The following is a 94-amino-acid chain: Small ribosomal subunit protein bS20c (94 aa).

The protein belongs to the bacterial ribosomal protein bS20 family.

It localises to the plastid. The protein resides in the chloroplast. Binds directly to 16S ribosomal RNA. The polypeptide is Small ribosomal subunit protein bS20c (Porphyra purpurea (Red seaweed)).